Reading from the N-terminus, the 101-residue chain is Class II hydrophobin 5 (101 aa).

The signal sequence occupies residues 1–15; sequence MQLTALLALATLAIA. 4 disulfides stabilise this stretch: Cys-33–Cys-83, Cys-44–Cys-74, Cys-45–Cys-57, and Cys-84–Cys-95.

It belongs to the cerato-ulmin hydrophobin family. Homodimer. Homodimers further self-assemble to form highly ordered films at water-air interfaces through intermolecular interactions.

It localises to the secreted. Its subcellular location is the cell wall. Functionally, aerial growth, conidiation, and dispersal of filamentous fungi in the environment rely upon a capability of their secreting small amphipathic proteins called hydrophobins (HPBs) with low sequence identity. Class I can self-assemble into an outermost layer of rodlet bundles on aerial cell surfaces, conferring cellular hydrophobicity that supports fungal growth, development and dispersal; whereas Class II form highly ordered films at water-air interfaces through intermolecular interactions but contribute nothing to the rodlet structure. The chain is Class II hydrophobin 5 from Trichoderma asperellum (strain ATCC 204424 / CBS 433.97 / NBRC 101777).